The chain runs to 2303 residues: Genome polyprotein (2303 aa).

The segment at 3 to 14 (CKHGYPDVCPIC) is a zinc-finger region. The interval 30–46 (DGEWFPTDLLCVDLDDD) is acidic. A theilo region spans residues 60–73 (MEWTDVPLVCDTVM). Positions 73–93 (MEPQGNASSSDKSNSQSSGNE) are disordered. The N-myristoyl glycine; by host moiety is linked to residue Gly77. Residues 80 to 90 (SSSDKSNSQSS) are compositionally biased toward low complexity. A disulfide bridge connects residues Cys501 and Cys503. Residues 1041–1047 (YYKQRLI) form a host EIF4E binding region. One can recognise an SF3 helicase domain in the interval 1283–1448 (IPLASLCEKF…CKTPAGMLDI (166 aa)). 1312–1319 (GAAGQGKS) contacts ATP. O-(5'-phospho-RNA)-tyrosine is present on Tyr1608. One can recognise a Peptidase C3 domain in the interval 1636-1829 (NPVMDFELFC…AATIITRELI (194 aa)). Catalysis depends on for protease 3C activity residues His1680, Asp1714, and Cys1793. Residues 2071–2189 (NYVYDVDYSN…GTNYQIDFNL (119 aa)) form the RdRp catalytic domain. Catalysis depends on for RdRp activity residues Asp2077 and Asp2175.

This sequence belongs to the picornaviruses polyprotein family. As to quaternary structure, interacts with host EIF4E. Interacts with the leader protein. Interacts with host RAN; the complex L-RAN recruits cellular kinases responsible for the L-induced nucleocytoplasmic trafficking inhibition. The complex L-RAN can further bind to the host exportins XPO1/CRM1 and CSE1L/CAS. Interacts with the protein 2A. Interacts with host RNASEL; this interaction prevents RNASEL activation by its substrate 2'-5' oligoadenylates. In terms of processing, phosphorylated. Specific enzymatic cleavages by the viral protease in vivo yield a variety of precursors and mature proteins. The polyprotein seems to be cotranslationally cleaved at the 2A/2B junction by a ribosomal skip from one codon to the next without formation of a peptide bond. This process would release the P1-2A peptide from the translational complex. Post-translationally, during virion maturation, immature virions are rendered infectious following cleavage of VP0 into VP4 and VP2. This maturation seems to be an autocatalytic event triggered by the presence of RNA in the capsid and is followed by a conformational change of the particle. In terms of processing, uridylylated by the polymerase and is covalently linked to the 5'-end of genomic RNA. This uridylylated form acts as a nucleotide-peptide primer for the polymerase. Myristoylation is required during RNA encapsidation and formation of the mature virus particle.

The protein resides in the virion. It localises to the host cytoplasm. It is found in the host nucleus. Its subcellular location is the host nucleolus. The protein localises to the host cytoplasmic vesicle membrane. The catalysed reaction is RNA(n) + a ribonucleoside 5'-triphosphate = RNA(n+1) + diphosphate. It carries out the reaction ATP + H2O = ADP + phosphate + H(+). The enzyme catalyses Selective cleavage of Gln-|-Gly bond in the poliovirus polyprotein. In other picornavirus reactions Glu may be substituted for Gln, and Ser or Thr for Gly.. Functionally, forms a complex with host RAN and probably binds to exportins carrying activated MAPK in order to mediate the hyperphosphorylation of host Phe/Gly containing nuclear pore proteins (Nups) resulting in cessation of active nucleocytoplasmic transport. Proteins with NLS signals fail to import, cellular mRNAs fail to export, and some proteins small enough for diffusion are not retained anymore (efflux). The resulting inhibition of cellular protein synthesis serves to ensure maximal viral gene expression and to evade host immune response. The leader protein also inhibits host interferon regulatory factor 3 (IRF3) dimerization, thereby blocking the transcriptional activation of IFN genes. Binds to host RNase L thereby preventing its activation by 2'-5' oligoadenylates in order to counteract the antiviral interferon-inducible OAS/RNase L pathway. Inhibits the integrated stress response (ISR) in the infected cell. Inhibits the host EIF2AK2/PKR by rendering this kinase unable to detect double-stranded RNA. Also impairs host stress granule formation probably by acting on a step downstream of EIF2AK2/PKR activation. Forms an icosahedral capsid of pseudo T=3 symmetry with capsid proteins VP2 and VP3. Together they form an icosahedral capsid composed of 60 copies of each VP1, VP2, and VP3, with a diameter of approximately 300 Angstroms. VP4 lies on the inner surface of the protein shell formed by VP1, VP2 and VP3. All the three latter proteins contain a beta-sheet structure called beta-barrel jelly roll. VP1 is situated at the 12 fivefold axes, whereas VP2 and VP3 are located at the quasi-sixfold axes. Its function is as follows. Lies on the inner surface of the capsid shell. After binding to the host receptor, the capsid undergoes conformational changes. Capsid protein VP4 is released, capsid protein VP1 N-terminus is externalized, and together, they shape a pore in the host membrane through which the viral genome is translocated into the host cell cytoplasm. After genome has been released, the channel shrinks. In terms of biological role, VP0 precursor is a component of immature procapsids. Functionally, involved in host translation shutoff by inhibiting cap-dependent mRNA translation. Nuclear localization is required for this function. The resulting inhibition of cellular protein synthesis serves to ensure maximal viral gene expression and to evade host immune response. Inhibits the phosphorylation of the leader protein. Binds to the RNA stem-loop essential for the ribosomal frameshift event and trans-activates the production of protein 2B*. Affects membrane integrity and causes an increase in membrane permeability. Its function is as follows. Associates with and induces structural rearrangements of intracellular membranes. It displays RNA-binding, nucleotide binding and NTPase activities. In terms of biological role, serves as membrane anchor via its hydrophobic domain. Functionally, forms a primer, VPg-pU, which is utilized by the polymerase for the initiation of RNA chains. Cysteine protease that generates mature viral proteins from the precursor polyprotein. In addition to its proteolytic activity, it binds to viral RNA, and thus influences viral genome replication. RNA and substrate cooperatively bind to the protease. Cleaves host PABP1, this cleavage is important for viral replication. Its function is as follows. Replicates the genomic and antigenomic RNAs by recognizing replications specific signals. Performs VPg uridylylation. In Mus musculus (Mouse), this protein is Genome polyprotein.